The chain runs to 165 residues: MSDVENGGEPRQPSVKPANQRGAARLAAVQALYQMDVGGTGVMEVVAEYEAHRLGQEVDGDTYLKADPSWFRSIVSGVVRDQTKIDPLVRSALLEDWPLSRLDATVRAILRAGTFEILERKDVPVAVIVTEYVEIARAFFEHDEPKLVNAVLDRIAKQVRGEAKR.

A disordered region spans residues 1-20 (MSDVENGGEPRQPSVKPANQ).

Belongs to the NusB family.

Functionally, involved in transcription antitermination. Required for transcription of ribosomal RNA (rRNA) genes. Binds specifically to the boxA antiterminator sequence of the ribosomal RNA (rrn) operons. The sequence is that of Transcription antitermination protein NusB from Agrobacterium fabrum (strain C58 / ATCC 33970) (Agrobacterium tumefaciens (strain C58)).